A 500-amino-acid polypeptide reads, in one-letter code: Endothelial lipase (500 aa).

The first 20 residues, 1–20, serve as a signal peptide directing secretion; sequence MRNTVFLLGFWSVYCYFPAG. Cysteine 64 and cysteine 77 are disulfide-bonded. N-linked (GlcNAc...) asparagine glycosylation is found at asparagine 65, asparagine 80, and asparagine 136. The active-site Nucleophile is serine 169. The Charge relay system role is filled by aspartate 193. An intrachain disulfide couples cysteine 252 to cysteine 272. Residue histidine 274 is the Charge relay system of the active site. Cystine bridges form between cysteine 297–cysteine 316 and cysteine 308–cysteine 311. Position 325-337 (325-337) interacts with heparin; that stretch reads KMRKKRNSKMYLK. The PLAT domain occupies 347–482; sequence YHYQLKVHMF…SPGQELWFHK (136 aa). N-linked (GlcNAc...) asparagine glycosylation is found at asparagine 359 and asparagine 393. Cysteine 463 and cysteine 483 are joined by a disulfide. Asparagine 491 carries N-linked (GlcNAc...) asparagine glycosylation.

Belongs to the AB hydrolase superfamily. Lipase family. Head to tail homodimer. Expressed in placenta, lung, liver, testis and spleen.

Its subcellular location is the secreted. The catalysed reaction is a triacylglycerol + H2O = a diacylglycerol + a fatty acid + H(+). It carries out the reaction a 1,2-diacyl-sn-glycero-3-phosphocholine + H2O = a 2-acyl-sn-glycero-3-phosphocholine + a fatty acid + H(+). The enzyme catalyses 1,2,3-tri-(9Z-octadecenoyl)-glycerol + H2O = di-(9Z)-octadecenoylglycerol + (9Z)-octadecenoate + H(+). It catalyses the reaction 1,2,3-tributanoylglycerol + H2O = dibutanoylglycerol + butanoate + H(+). The catalysed reaction is 1,2-dihexadecanoyl-sn-glycero-3-phosphocholine + H2O = hexadecanoyl-sn-glycero-3-phosphocholine + hexadecanoate + H(+). Functionally, exerts both phospholipase and triglyceride lipase activities. More active as a phospholipase than a triglyceride lipase. Hydrolyzes triglycerides, both with short-chain fatty acyl groups (tributyrin) and long-chain fatty acyl groups (triolein) with similar levels of activity toward both types of substrates. Hydrolyzes high density lipoproteins (HDL) more efficiently than other lipoproteins. This Mus musculus (Mouse) protein is Endothelial lipase (Lipg).